A 553-amino-acid chain; its full sequence is Phospholipase B (553 aa).

The N-terminal stretch at 1–35 is a signal peptide; that stretch reads MIRFGNPSSSDKRRQRCRSWYWGGLLLLWAVAETR. N-linked (GlcNAc...) asparagine glycosylation is found at Asn313, Asn416, and Asn531.

This sequence belongs to the phospholipase B-like family. In terms of tissue distribution, expressed by the venom gland.

It localises to the secreted. Functionally, may cause hemolysis or may be involved in protein folding and translation. This Crotalus adamanteus (Eastern diamondback rattlesnake) protein is Phospholipase B.